Consider the following 182-residue polypeptide: Ribosome maturation factor RimM (182 aa).

Positions Glu-103–Phe-182 constitute a PRC barrel domain.

This sequence belongs to the RimM family. In terms of assembly, binds ribosomal protein uS19.

Its subcellular location is the cytoplasm. Functionally, an accessory protein needed during the final step in the assembly of 30S ribosomal subunit, possibly for assembly of the head region. Essential for efficient processing of 16S rRNA. May be needed both before and after RbfA during the maturation of 16S rRNA. It has affinity for free ribosomal 30S subunits but not for 70S ribosomes. In Yersinia pestis (strain Pestoides F), this protein is Ribosome maturation factor RimM.